Reading from the N-terminus, the 306-residue chain is Protoheme IX farnesyltransferase (306 aa).

The next 9 helical transmembrane spans lie at 35 to 55 (LIVF…PTWL), 61 to 81 (LIAC…NCLV), 106 to 126 (LTLA…YVWV), 129 to 149 (LTMW…TVIL), 157 to 177 (IVIG…AMTG), 183 to 203 (ALIL…ALAL), 224 to 244 (EFTR…CLMP), 245 to 265 (FIFK…SIGF), and 286 to 306 (RFSL…HYLI).

This sequence belongs to the UbiA prenyltransferase family. Protoheme IX farnesyltransferase subfamily.

The protein localises to the cell inner membrane. The enzyme catalyses heme b + (2E,6E)-farnesyl diphosphate + H2O = Fe(II)-heme o + diphosphate. It participates in porphyrin-containing compound metabolism; heme O biosynthesis; heme O from protoheme: step 1/1. Its function is as follows. Converts heme B (protoheme IX) to heme O by substitution of the vinyl group on carbon 2 of heme B porphyrin ring with a hydroxyethyl farnesyl side group. The polypeptide is Protoheme IX farnesyltransferase (Polaromonas naphthalenivorans (strain CJ2)).